We begin with the raw amino-acid sequence, 257 residues long: ECF RNA polymerase sigma factor SigE (257 aa).

The tract at residues 87–153 is sigma-70 factor domain-2; it reads MPSWDELVRQ…RITTNLFLDM (67 aa). The short motif at 111 to 114 is the Polymerase core binding element; sequence NQHD. The tract at residues 186–236 is sigma-70 factor domain-4; the sequence is SRLGADLQAALDSLPPEFRAAVVLCDIEGLSYEEIGATLGVKLGTVRSRIH. Positions 211–230 form a DNA-binding region, H-T-H motif; that stretch reads DIEGLSYEEIGATLGVKLGT.

Belongs to the sigma-70 factor family. ECF subfamily. As to quaternary structure, interacts transiently with the RNA polymerase catalytic core formed by RpoA, RpoB, RpoC and RpoZ (2 alpha, 1 beta, 1 beta' and 1 omega subunit) to form the RNA polymerase holoenzyme that can initiate transcription. Interacts (via sigma-70 factor domain 4) with RseA; interaction is abrogated by treatment of cells with H(2)O(2) or detergent.

Sigma factors are initiation factors that promote the attachment of RNA polymerase to specific initiation sites and are then released. Extracytoplasmic function (ECF) sigma factors are held in an inactive form by an anti-sigma factor until released. The protein is ECF RNA polymerase sigma factor SigE (sigE) of Mycolicibacterium smegmatis (strain ATCC 700084 / mc(2)155) (Mycobacterium smegmatis).